The sequence spans 475 residues: Doublecortin domain-containing protein 2 (475 aa).

2 Doublecortin domains span residues 17-100 and 139-221; these read KSVL…LNYL and CTIF…LPYS. Positions 234-475 are disordered; sequence YGQKASSLPP…ESNKASSAVA (242 aa). A compositionally biased stretch (polar residues) spans 252–272; the sequence is GSGNYRQSKSTIGSSDNSSPQ. Position 270 is a phosphoserine (serine 270). Residues 353-365 are compositionally biased toward basic and acidic residues; sequence EKTSKDANQKDDF. Residues 407–419 show a composition bias toward acidic residues; sequence TDEENGEELDQVT. The segment covering 455 to 475 has biased composition (polar residues); that stretch reads TVTSPQENEGNESNKASSAVA.

Interacts with DVL1, DVL2 and DVL3. Expressed in hair cells of the inner ear.

The protein resides in the cell projection. The protein localises to the cilium. It localises to the cytoplasm. Its subcellular location is the cytoskeleton. It is found in the cilium axoneme. The protein resides in the kinocilium. Its function is as follows. Protein that plays a role in the inhibition of canonical Wnt signaling pathway. May be involved in neuronal migration during development of the cerebral neocortex. Involved in the control of ciliogenesis and ciliary length. The protein is Doublecortin domain-containing protein 2 (Dcdc2) of Rattus norvegicus (Rat).